A 321-amino-acid polypeptide reads, in one-letter code: Cytochrome c biogenesis protein CcsA (321 aa).

Transmembrane regions (helical) follow at residues 9 to 29, 44 to 64, 71 to 91, 98 to 118, 143 to 163, 225 to 245, 260 to 280, and 288 to 308; these read ILTH…LMTL, GIIS…IYSG, LYES…IPYL, LSVI…SCLS, MLLS…LLVI, IISL…VWAN, WAFI…NINF, and VASI…LLGI.

This sequence belongs to the CcmF/CycK/Ccl1/NrfE/CcsA family. In terms of assembly, may interact with Ccs1.

It is found in the plastid. Its subcellular location is the chloroplast thylakoid membrane. Functionally, required during biogenesis of c-type cytochromes (cytochrome c6 and cytochrome f) at the step of heme attachment. The sequence is that of Cytochrome c biogenesis protein CcsA from Dioscorea elephantipes (Elephant's foot yam).